The sequence spans 461 residues: Cysteine--tRNA ligase (461 aa).

Residue cysteine 28 coordinates Zn(2+). The short motif at 30–40 is the 'HIGH' region element; it reads VTIYDLCHIGH. Cysteine 209, histidine 234, and glutamate 238 together coordinate Zn(2+). Residues 266–270 carry the 'KMSKS' region motif; that stretch reads KMSKS. Position 269 (lysine 269) interacts with ATP.

This sequence belongs to the class-I aminoacyl-tRNA synthetase family. Monomer. Zn(2+) serves as cofactor.

It localises to the cytoplasm. The catalysed reaction is tRNA(Cys) + L-cysteine + ATP = L-cysteinyl-tRNA(Cys) + AMP + diphosphate. This chain is Cysteine--tRNA ligase, found in Edwardsiella ictaluri (strain 93-146).